Reading from the N-terminus, the 273-residue chain is Shikimate dehydrogenase (NADP(+)) (273 aa).

Residues 18-20 (SKS) and Thr-65 each bind shikimate. Catalysis depends on Lys-69, which acts as the Proton acceptor. Residue Glu-81 coordinates NADP(+). Shikimate contacts are provided by Asn-90 and Asp-105. Residues 130 to 134 (GAGGA), 154 to 159 (NRTHSK), and Met-217 contribute to the NADP(+) site. Residue Tyr-219 coordinates shikimate. Residue Gly-240 coordinates NADP(+).

This sequence belongs to the shikimate dehydrogenase family. Homodimer.

The catalysed reaction is shikimate + NADP(+) = 3-dehydroshikimate + NADPH + H(+). Its pathway is metabolic intermediate biosynthesis; chorismate biosynthesis; chorismate from D-erythrose 4-phosphate and phosphoenolpyruvate: step 4/7. Involved in the biosynthesis of the chorismate, which leads to the biosynthesis of aromatic amino acids. Catalyzes the reversible NADPH linked reduction of 3-dehydroshikimate (DHSA) to yield shikimate (SA). The chain is Shikimate dehydrogenase (NADP(+)) from Janthinobacterium sp. (strain Marseille) (Minibacterium massiliensis).